The sequence spans 305 residues: Ribonuclease Z (305 aa).

Zn(2+)-binding residues include His61, His63, Asp65, His66, His138, Asp208, and His266. Asp65 acts as the Proton acceptor in catalysis.

This sequence belongs to the RNase Z family. In terms of assembly, homodimer. The cofactor is Zn(2+).

The catalysed reaction is Endonucleolytic cleavage of RNA, removing extra 3' nucleotides from tRNA precursor, generating 3' termini of tRNAs. A 3'-hydroxy group is left at the tRNA terminus and a 5'-phosphoryl group is left at the trailer molecule.. Its function is as follows. Zinc phosphodiesterase, which displays some tRNA 3'-processing endonuclease activity. Probably involved in tRNA maturation, by removing a 3'-trailer from precursor tRNA. In Methanosarcina mazei (strain ATCC BAA-159 / DSM 3647 / Goe1 / Go1 / JCM 11833 / OCM 88) (Methanosarcina frisia), this protein is Ribonuclease Z.